Here is a 309-residue protein sequence, read N- to C-terminus: Glutaminase (309 aa).

Positions 64, 114, 160, 167, 191, 243, and 261 each coordinate substrate.

Belongs to the glutaminase family. As to quaternary structure, homotetramer.

The catalysed reaction is L-glutamine + H2O = L-glutamate + NH4(+). The sequence is that of Glutaminase from Azorhizobium caulinodans (strain ATCC 43989 / DSM 5975 / JCM 20966 / LMG 6465 / NBRC 14845 / NCIMB 13405 / ORS 571).